Here is a 283-residue protein sequence, read N- to C-terminus: Probable 3-deoxy-manno-octulosonic acid transferase (283 aa).

It is found in the cytoplasm. The enzyme catalyses an alpha-Kdo-(2-&gt;4)-alpha-Kdo-(2-&gt;6)-lipid IVA + CMP-3-deoxy-beta-D-manno-octulosonate = an alpha-Kdo-(2-&gt;4)-alpha-Kdo-(2-&gt;4)-alpha-Kdo-(2-&gt;6)-lipid IVA + CMP + H(+). The catalysed reaction is alpha-Kdo-(2-&gt;4)-alpha-Kdo-(2-&gt;6)-lipid IVA (E. coli) + CMP-3-deoxy-beta-D-manno-octulosonate = alpha-Kdo-(2-&gt;4)-alpha-Kdo-(2-&gt;4)-alpha-Kdo-(2-&gt;6)-lipid IVA + CMP + H(+). It participates in bacterial outer membrane biogenesis; LPS core biosynthesis. It functions in the pathway bacterial outer membrane biogenesis; LOS core biosynthesis. In terms of biological role, involved in the biosynthesis of the core oligosaccharide region of lipopolysaccharide (LPS). Required for the addition of 3-deoxy-D-manno-oct-2-ulosonic acid III (KdoIII) to the KdoII residue of the inner lipopolysaccharide core. May also play a role in a lipooligosaccharide (LOS) biosynthesis pathway. In Escherichia coli (strain K12), this protein is Probable 3-deoxy-manno-octulosonic acid transferase.